The chain runs to 626 residues: MIKKEFKAESKRLLDLMINSIYTHKEIFLRELISNSSDAIDKIYYKALTDESMIFNKEDYYIKITTDKENKMLIISDMGIGMTKEELEENLGVIAQSGSFTFKKENEIKDGFDIIGQFGVGFYSAFMVADSVTVISKALGSDQGYKWESIGAEGYTIEPYEKESVGTEIILKLKENTEDEKYEDYLEAYRLKTIIKKYSDFIRYPIKMDIETSKPKEGAEGEYEEIVEEQVVNSMVPMWRRNKNELTKEDYDLFYSEKHYGFDKPLKHIHISADGAVRYNAILFIPEKIPYDFYTKEYEKGLELYSSGVLIMNKCSDLLPDYFSFVKGMVDSEDLSLNISREMLQHDRQLKIIAKKIKEKIKSELELLLKNERERYEEFYDSFGRQIKYGVYSDFGQNKETLKDLLLFYSSKEKKMVTLDEYVGRMKEDQKYIYYASGDSIEKIDKMPQTELLAEQGYEILYFADDVDEFAIRVLVDYKEKEFKSVSSGDLGIEEKDEKEEQEEQTQGSKEVFAFMKEALSQKVKDVRPSKRLKNHPVCLATDGDVTIEMEKILSAMPNNQEIKAERVLEININHDVFKTLKEAFDNDQEKLKIYTNVLYNQALLIEGLTINDPVEFTNDICKLMS.

The a; substrate-binding stretch occupies residues 1–341 (MIKKEFKAES…SEDLSLNISR (341 aa)). A b region spans residues 342–552 (EMLQHDRQLK…DGDVTIEMEK (211 aa)). The interval 553 to 626 (ILSAMPNNQE…FTNDICKLMS (74 aa)) is c.

The protein belongs to the heat shock protein 90 family. As to quaternary structure, homodimer.

Its subcellular location is the cytoplasm. Molecular chaperone. Has ATPase activity. This Alkaliphilus metalliredigens (strain QYMF) protein is Chaperone protein HtpG.